A 351-amino-acid polypeptide reads, in one-letter code: Phosphate acetyltransferase (351 aa).

Belongs to the phosphate acetyltransferase and butyryltransferase family.

The protein localises to the cytoplasm. It catalyses the reaction acetyl-CoA + phosphate = acetyl phosphate + CoA. It functions in the pathway metabolic intermediate biosynthesis; acetyl-CoA biosynthesis; acetyl-CoA from acetate: step 2/2. This is Phosphate acetyltransferase (pta) from Rickettsia prowazekii (strain Madrid E).